A 340-amino-acid chain; its full sequence is Probable complex I intermediate-associated protein 30, mitochondrial (340 aa).

This sequence belongs to the CIA30 family.

The protein resides in the mitochondrion. Its function is as follows. Chaperone protein involved in the assembly of the mitochondrial NADH:ubiquinone oxidoreductase complex (complex I). Required for normal growth and reproduction. In Caenorhabditis elegans, this protein is Probable complex I intermediate-associated protein 30, mitochondrial (nuaf-1).